The chain runs to 198 residues: Putative transposase InsO for insertion sequence element IS911B (198 aa).

The 94-residue stretch at alanine 105 to valine 198 folds into the Integrase catalytic domain.

Functionally, involved in the transposition of the insertion sequence IS911B. In Escherichia coli (strain K12), this protein is Putative transposase InsO for insertion sequence element IS911B (insO2).